Reading from the N-terminus, the 509-residue chain is Cardiolipin synthase 1 (509 aa).

Helical transmembrane passes span 4–24 (PIVQ…LLNT), 30–50 (YTFV…VIFI), and 59–79 (LAWF…YAIF). 2 PLD phosphodiesterase domains span residues 238–265 (VNYR…GDEY) and 422–449 (KDGF…DVRS). Residues histidine 243, lysine 245, aspartate 250, histidine 427, lysine 429, and aspartate 434 contribute to the active site.

The protein belongs to the phospholipase D family. Cardiolipin synthase subfamily.

It localises to the cell membrane. The catalysed reaction is 2 a 1,2-diacyl-sn-glycero-3-phospho-(1'-sn-glycerol) = a cardiolipin + glycerol. Functionally, catalyzes the reversible phosphatidyl group transfer from one phosphatidylglycerol molecule to another to form cardiolipin (CL) (diphosphatidylglycerol) and glycerol. This is Cardiolipin synthase 1 (cls1) from Bacillus cereus (strain ATCC 14579 / DSM 31 / CCUG 7414 / JCM 2152 / NBRC 15305 / NCIMB 9373 / NCTC 2599 / NRRL B-3711).